The chain runs to 465 residues: Ribulose bisphosphate carboxylase large chain (465 aa).

Lys-4 carries the post-translational modification N6,N6,N6-trimethyllysine. Substrate contacts are provided by Asn-113 and Thr-163. Lys-165 functions as the Proton acceptor in the catalytic mechanism. Lys-167 is a binding site for substrate. Mg(2+) is bound by residues Lys-191, Asp-193, and Glu-194. N6-carboxylysine is present on Lys-191. The active-site Proton acceptor is His-284. Positions 285, 317, and 369 each coordinate substrate.

Belongs to the RuBisCO large chain family. Type I subfamily. In terms of assembly, heterohexadecamer of 8 large chains and 8 small chains; disulfide-linked. The disulfide link is formed within the large subunit homodimers. Mg(2+) is required as a cofactor. The disulfide bond which can form in the large chain dimeric partners within the hexadecamer appears to be associated with oxidative stress and protein turnover.

It is found in the plastid. The protein resides in the chloroplast. It carries out the reaction 2 (2R)-3-phosphoglycerate + 2 H(+) = D-ribulose 1,5-bisphosphate + CO2 + H2O. The catalysed reaction is D-ribulose 1,5-bisphosphate + O2 = 2-phosphoglycolate + (2R)-3-phosphoglycerate + 2 H(+). In terms of biological role, ruBisCO catalyzes two reactions: the carboxylation of D-ribulose 1,5-bisphosphate, the primary event in carbon dioxide fixation, as well as the oxidative fragmentation of the pentose substrate in the photorespiration process. Both reactions occur simultaneously and in competition at the same active site. The sequence is that of Ribulose bisphosphate carboxylase large chain from Eucommia ulmoides (Hardy rubber tree).